Reading from the N-terminus, the 456-residue chain is Tyrosine phenol-lyase (456 aa).

Lys257 carries the post-translational modification N6-(pyridoxal phosphate)lysine.

This sequence belongs to the beta-eliminating lyase family. In terms of assembly, homotetramer. It depends on pyridoxal 5'-phosphate as a cofactor. Post-translationally, contains L-DOPA (3',4'-dihydroxyphenylalanine).

The protein localises to the cytoplasm. It carries out the reaction L-tyrosine + H2O = phenol + pyruvate + NH4(+). The protein is Tyrosine phenol-lyase (tpl) of Enterobacter agglomerans (Erwinia herbicola).